Reading from the N-terminus, the 333-residue chain is Protein-methionine-sulfoxide reductase catalytic subunit MsrP (333 aa).

Positions 1-43 (MHKHRKPTEADVTPESLFYQRRRVLKALGISAAALSLPLSAQA) form a signal peptide, tat-type signal. Residues Asn-87, 90-91 (YE), Cys-145, Thr-180, Asn-232, Arg-237, and 248-250 (NIK) contribute to the Mo-molybdopterin site.

This sequence belongs to the MsrP family. Heterodimer of a catalytic subunit (MsrP) and a heme-binding subunit (MsrQ). The cofactor is Mo-molybdopterin. Predicted to be exported by the Tat system. The position of the signal peptide cleavage has not been experimentally proven.

It localises to the periplasm. It carries out the reaction L-methionyl-[protein] + a quinone + H2O = L-methionyl-(S)-S-oxide-[protein] + a quinol. The catalysed reaction is L-methionyl-[protein] + a quinone + H2O = L-methionyl-(R)-S-oxide-[protein] + a quinol. Its function is as follows. Part of the MsrPQ system that repairs oxidized periplasmic proteins containing methionine sulfoxide residues (Met-O), using respiratory chain electrons. Thus protects these proteins from oxidative-stress damage caused by reactive species of oxygen and chlorine generated by the host defense mechanisms. MsrPQ is essential for the maintenance of envelope integrity under bleach stress, rescuing a wide series of structurally unrelated periplasmic proteins from methionine oxidation. The catalytic subunit MsrP is non-stereospecific, being able to reduce both (R-) and (S-) diastereoisomers of methionine sulfoxide. In Pectobacterium atrosepticum (strain SCRI 1043 / ATCC BAA-672) (Erwinia carotovora subsp. atroseptica), this protein is Protein-methionine-sulfoxide reductase catalytic subunit MsrP.